Consider the following 222-residue polypeptide: UPF0173 metal-dependent hydrolase Kcr_0055 (222 aa).

The protein belongs to the UPF0173 family.

In Korarchaeum cryptofilum (strain OPF8), this protein is UPF0173 metal-dependent hydrolase Kcr_0055.